The chain runs to 613 residues: Chaperone protein dnaK (613 aa).

It belongs to the heat shock protein 70 family.

The protein resides in the plastid. It localises to the chloroplast. Functionally, acts as a chaperone. In Phaeodactylum tricornutum (strain CCAP 1055/1), this protein is Chaperone protein dnaK.